The chain runs to 136 residues: ATP synthase epsilon chain (136 aa).

It belongs to the ATPase epsilon chain family. In terms of assembly, F-type ATPases have 2 components, CF(1) - the catalytic core - and CF(0) - the membrane proton channel. CF(1) has five subunits: alpha(3), beta(3), gamma(1), delta(1), epsilon(1). CF(0) has three main subunits: a, b and c.

The protein localises to the cell membrane. Its function is as follows. Produces ATP from ADP in the presence of a proton gradient across the membrane. This is ATP synthase epsilon chain from Exiguobacterium sp. (strain ATCC BAA-1283 / AT1b).